The primary structure comprises 174 residues: MPTWMLLFCLLCVTSSNLSSALEDNCKTFSTTLPNMLRELRAAFSSVKTYFQTRDKLETKLIDKSLLEELKSYLGCQALSEMIKFYLEEVMPRAEENELDVKEDVGSLGEKLKALRLRLKRCHRFLPCEDNSRVVKQVRNTYKELQEQGVYKAMGDFDIFIGYMEEYLTMHIGK.

The N-terminal stretch at 1-16 is a signal peptide; it reads MPTWMLLFCLLCVTSS. Asn17 carries an N-linked (GlcNAc...) asparagine glycan. Disulfide bonds link Cys26–Cys122 and Cys76–Cys128.

This sequence belongs to the IL-10 family. Homodimer. Interacts with IL10RA and IL10RB.

It localises to the secreted. In terms of biological role, major immune regulatory cytokine that acts on many cells of the immune system where it has profound anti-inflammatory functions, limiting excessive tissue disruption caused by inflammation. Mechanistically, IL10 binds to its heterotetrameric receptor comprising IL10RA and IL10RB leading to JAK1 and STAT2-mediated phosphorylation of STAT3. In turn, STAT3 translocates to the nucleus where it drives expression of anti-inflammatory mediators. Targets antigen-presenting cells (APCs) such as macrophages and monocytes and inhibits their release of pro-inflammatory cytokines including granulocyte-macrophage colony-stimulating factor /GM-CSF, granulocyte colony-stimulating factor/G-CSF, IL-1 alpha, IL-1 beta, IL-6, IL-8 and TNF-alpha. Also interferes with antigen presentation by reducing the expression of MHC-class II and co-stimulatory molecules, thereby inhibiting their ability to induce T cell activation. In addition, controls the inflammatory response of macrophages by reprogramming essential metabolic pathways including mTOR signaling. In Trichosurus vulpecula (Brush-tailed possum), this protein is Interleukin-10 (IL10).